Here is a 464-residue protein sequence, read N- to C-terminus: tRNA modification GTPase MnmE (464 aa).

(6S)-5-formyl-5,6,7,8-tetrahydrofolate is bound by residues R28, E90, and R129. A TrmE-type G domain is found at 226 to 385 (GLATAIVGRP…LEEKIAELFF (160 aa)). N236 contributes to the K(+) binding site. Residues 236–241 (NVGKSS), 255–261 (TDIAGTT), and 280–283 (DTAG) each bind GTP. S240 is a Mg(2+) binding site. Residues T255, I257, and T260 each coordinate K(+). T261 lines the Mg(2+) pocket. (6S)-5-formyl-5,6,7,8-tetrahydrofolate is bound at residue K464.

It belongs to the TRAFAC class TrmE-Era-EngA-EngB-Septin-like GTPase superfamily. TrmE GTPase family. Homodimer. Heterotetramer of two MnmE and two MnmG subunits. K(+) serves as cofactor.

The protein resides in the cytoplasm. Exhibits a very high intrinsic GTPase hydrolysis rate. Involved in the addition of a carboxymethylaminomethyl (cmnm) group at the wobble position (U34) of certain tRNAs, forming tRNA-cmnm(5)s(2)U34. This Ligilactobacillus salivarius (strain UCC118) (Lactobacillus salivarius) protein is tRNA modification GTPase MnmE.